The chain runs to 156 residues: Small ribosomal subunit protein uS7 (156 aa).

The protein belongs to the universal ribosomal protein uS7 family. In terms of assembly, part of the 30S ribosomal subunit. Contacts proteins S9 and S11.

Its function is as follows. One of the primary rRNA binding proteins, it binds directly to 16S rRNA where it nucleates assembly of the head domain of the 30S subunit. Is located at the subunit interface close to the decoding center, probably blocks exit of the E-site tRNA. The chain is Small ribosomal subunit protein uS7 from Geotalea uraniireducens (strain Rf4) (Geobacter uraniireducens).